The primary structure comprises 320 residues: Iminosuccinate reductase (320 aa).

Lys67 functions as the Proton donor/acceptor in the catalytic mechanism. Residues Arg110, 137–138, Asn159, Ser199, 219–222, Lys226, and Gly291 contribute to the NAD(+) site; these read HQ and MGTD.

It belongs to the ornithine cyclodeaminase/mu-crystallin family. BhcD subfamily.

It carries out the reaction L-aspartate + NAD(+) = iminosuccinate + NADH + H(+). Imine reductase that catalyzes the NADH-dependent reduction of iminosuccinate to L-aspartate. Is essential for the growth of P.denitrificans in the presence of glycolate and glyoxylate since it functions in glyoxylate assimilation via the beta-hydroxyaspartate cycle (BHAC). Thereby BhcD regenerates the amino group donor for the first step of the BHAC. In Paracoccus denitrificans (strain Pd 1222), this protein is Iminosuccinate reductase.